A 312-amino-acid chain; its full sequence is Pantothenate kinase (312 aa).

97–104 (GSVAVGKS) serves as a coordination point for ATP.

It belongs to the prokaryotic pantothenate kinase family.

The protein localises to the cytoplasm. The enzyme catalyses (R)-pantothenate + ATP = (R)-4'-phosphopantothenate + ADP + H(+). Its pathway is cofactor biosynthesis; coenzyme A biosynthesis; CoA from (R)-pantothenate: step 1/5. This is Pantothenate kinase from Mycobacterium marinum (strain ATCC BAA-535 / M).